A 44-amino-acid polypeptide reads, in one-letter code: DNA-directed RNA polymerase subunit Rpo12 (44 aa).

3 residues coordinate Zn(2+): C8, C22, and C25.

The protein belongs to the archaeal Rpo12/eukaryotic RPC10 RNA polymerase subunit family. As to quaternary structure, part of the RNA polymerase complex. It depends on Zn(2+) as a cofactor.

Its subcellular location is the cytoplasm. The catalysed reaction is RNA(n) + a ribonucleoside 5'-triphosphate = RNA(n+1) + diphosphate. DNA-dependent RNA polymerase (RNAP) catalyzes the transcription of DNA into RNA using the four ribonucleoside triphosphates as substrates. The protein is DNA-directed RNA polymerase subunit Rpo12 of Halobacterium salinarum (strain ATCC 29341 / DSM 671 / R1).